Reading from the N-terminus, the 309-residue chain is Porphobilinogen deaminase (309 aa).

An S-(dipyrrolylmethanemethyl)cysteine modification is found at Cys242.

This sequence belongs to the HMBS family. In terms of assembly, monomer. Requires dipyrromethane as cofactor.

It catalyses the reaction 4 porphobilinogen + H2O = hydroxymethylbilane + 4 NH4(+). It functions in the pathway porphyrin-containing compound metabolism; protoporphyrin-IX biosynthesis; coproporphyrinogen-III from 5-aminolevulinate: step 2/4. Its function is as follows. Tetrapolymerization of the monopyrrole PBG into the hydroxymethylbilane pre-uroporphyrinogen in several discrete steps. The polypeptide is Porphobilinogen deaminase (Hamiltonella defensa subsp. Acyrthosiphon pisum (strain 5AT)).